A 398-amino-acid chain; its full sequence is Abhydrolase domain-containing protein 2 (398 aa).

The Cytoplasmic segment spans residues 1 to 4; that stretch reads MSTA. A helical; Signal-anchor for type II membrane protein membrane pass occupies residues 5 to 22; it reads FLTLIAVIVCILFRILNV. The Extracellular portion of the chain corresponds to 23–398; the sequence is HSQPLKPSVW…MMHEVGKVAP (376 aa). Positions 113 to 365 constitute an AB hydrolase-1 domain; it reads VAICPGIANS…HGGHLGFYEG (253 aa). Residues Ser192, Asp328, and His359 each act as charge relay system in the active site.

This sequence belongs to the AB hydrolase superfamily. AB hydrolase 4 family.

The protein resides in the membrane. This chain is Abhydrolase domain-containing protein 2 (Hydr2), found in Drosophila melanogaster (Fruit fly).